We begin with the raw amino-acid sequence, 199 residues long: Probable molybdenum cofactor guanylyltransferase (199 aa).

GTP-binding positions include 6–8, K18, D65, and D97; that span reads LAG. Residue D97 coordinates Mg(2+).

The protein belongs to the MobA family. The cofactor is Mg(2+).

Its subcellular location is the cytoplasm. The catalysed reaction is Mo-molybdopterin + GTP + H(+) = Mo-molybdopterin guanine dinucleotide + diphosphate. Transfers a GMP moiety from GTP to Mo-molybdopterin (Mo-MPT) cofactor (Moco or molybdenum cofactor) to form Mo-molybdopterin guanine dinucleotide (Mo-MGD) cofactor. This chain is Probable molybdenum cofactor guanylyltransferase, found in Staphylococcus aureus (strain COL).